Reading from the N-terminus, the 178-residue chain is Ribosome maturation factor RimM (178 aa).

Residues Ala-101–Phe-178 enclose the PRC barrel domain.

Belongs to the RimM family. As to quaternary structure, binds ribosomal protein uS19.

It localises to the cytoplasm. Its function is as follows. An accessory protein needed during the final step in the assembly of 30S ribosomal subunit, possibly for assembly of the head region. Essential for efficient processing of 16S rRNA. May be needed both before and after RbfA during the maturation of 16S rRNA. It has affinity for free ribosomal 30S subunits but not for 70S ribosomes. The sequence is that of Ribosome maturation factor RimM from Pseudomonas fluorescens (strain Pf0-1).